The following is a 269-amino-acid chain: Phosphatidylglycerol--prolipoprotein diacylglyceryl transferase (269 aa).

7 consecutive transmembrane segments (helical) span residues 17-37, 59-79, 95-115, 123-143, 181-201, 206-226, and 242-262; these read IGPI…MLGW, FLVW…VLFY, WQGG…IIAF, LFQV…FGRI, AGLE…LTGI, GALS…SEFF, and MGQL…AWAL. R142 contributes to the a 1,2-diacyl-sn-glycero-3-phospho-(1'-sn-glycerol) binding site.

It belongs to the Lgt family.

It is found in the cell inner membrane. It catalyses the reaction L-cysteinyl-[prolipoprotein] + a 1,2-diacyl-sn-glycero-3-phospho-(1'-sn-glycerol) = an S-1,2-diacyl-sn-glyceryl-L-cysteinyl-[prolipoprotein] + sn-glycerol 1-phosphate + H(+). It functions in the pathway protein modification; lipoprotein biosynthesis (diacylglyceryl transfer). In terms of biological role, catalyzes the transfer of the diacylglyceryl group from phosphatidylglycerol to the sulfhydryl group of the N-terminal cysteine of a prolipoprotein, the first step in the formation of mature lipoproteins. In Paramagnetospirillum magneticum (strain ATCC 700264 / AMB-1) (Magnetospirillum magneticum), this protein is Phosphatidylglycerol--prolipoprotein diacylglyceryl transferase.